Reading from the N-terminus, the 230-residue chain is Leucyl/phenylalanyl-tRNA--protein transferase (230 aa).

It belongs to the L/F-transferase family.

It is found in the cytoplasm. The catalysed reaction is N-terminal L-lysyl-[protein] + L-leucyl-tRNA(Leu) = N-terminal L-leucyl-L-lysyl-[protein] + tRNA(Leu) + H(+). The enzyme catalyses N-terminal L-arginyl-[protein] + L-leucyl-tRNA(Leu) = N-terminal L-leucyl-L-arginyl-[protein] + tRNA(Leu) + H(+). It catalyses the reaction L-phenylalanyl-tRNA(Phe) + an N-terminal L-alpha-aminoacyl-[protein] = an N-terminal L-phenylalanyl-L-alpha-aminoacyl-[protein] + tRNA(Phe). Functionally, functions in the N-end rule pathway of protein degradation where it conjugates Leu, Phe and, less efficiently, Met from aminoacyl-tRNAs to the N-termini of proteins containing an N-terminal arginine or lysine. The sequence is that of Leucyl/phenylalanyl-tRNA--protein transferase from Erwinia tasmaniensis (strain DSM 17950 / CFBP 7177 / CIP 109463 / NCPPB 4357 / Et1/99).